Here is a 324-residue protein sequence, read N- to C-terminus: Ferrochelatase (324 aa).

His197 and Glu278 together coordinate Fe cation.

It belongs to the ferrochelatase family.

It is found in the cytoplasm. The enzyme catalyses heme b + 2 H(+) = protoporphyrin IX + Fe(2+). Its pathway is porphyrin-containing compound metabolism; protoheme biosynthesis; protoheme from protoporphyrin-IX: step 1/1. Its function is as follows. Catalyzes the ferrous insertion into protoporphyrin IX. The sequence is that of Ferrochelatase from Aeromonas hydrophila subsp. hydrophila (strain ATCC 7966 / DSM 30187 / BCRC 13018 / CCUG 14551 / JCM 1027 / KCTC 2358 / NCIMB 9240 / NCTC 8049).